Here is a 92-residue protein sequence, read N- to C-terminus: Small ribosomal subunit protein uS19 (92 aa).

Belongs to the universal ribosomal protein uS19 family.

Protein S19 forms a complex with S13 that binds strongly to the 16S ribosomal RNA. The polypeptide is Small ribosomal subunit protein uS19 (Ruegeria pomeroyi (strain ATCC 700808 / DSM 15171 / DSS-3) (Silicibacter pomeroyi)).